Reading from the N-terminus, the 443-residue chain is Probable D-serine dehydratase (443 aa).

Lysine 118 carries the post-translational modification N6-(pyridoxal phosphate)lysine.

Belongs to the serine/threonine dehydratase family. DsdA subfamily. The cofactor is pyridoxal 5'-phosphate.

The catalysed reaction is D-serine = pyruvate + NH4(+). In Vibrio campbellii (strain ATCC BAA-1116), this protein is Probable D-serine dehydratase.